The chain runs to 320 residues: MKKPNGTNGASSSLEPPPSTFQPLCHPLVEEVSKEVDGYFLQHWNFPNEKARKKFVAAGFSRVTCLYFPKALDDRIHFACRLLTVLFLIDDLLEYMSFEEGSAYNEKLIPISRGDVLPDRSIPVEYIIYDLWESMRAHDREMADEILEPVFLFMRAQTDRTRARPMGLGGYLEYRERDVGKELLAALMRFSMGLKLSPSELQRVREIDANCSKHLSVVNDIYSYEKELYTSKTAHSEGGILCTSVQILAQEADVTAEAAKRVLFVMCREWELRHQLLVARLSAEGLETPGLAAYVEGLEYQMSGNELWSQTTLRYSVVVD.

Positions 1 to 14 (MKKPNGTNGASSSL) are enriched in polar residues. A disordered region spans residues 1–20 (MKKPNGTNGASSSLEPPPST). Positions 90, 219, 223, and 227 each coordinate Mg(2+). The (2E,6E)-farnesyl diphosphate site is built by Arg314 and Tyr315.

The protein belongs to the terpene synthase family. As to quaternary structure, homodimer. The cofactor is Mg(2+).

The enzyme catalyses (2E,6E)-farnesyl diphosphate = (+)-aristolochene + diphosphate. It functions in the pathway sesquiterpene biosynthesis; aristolochene biosynthesis; aristolochene from farnesyl diphosphate: step 1/1. Functionally, catalyzes the cyclization of trans,trans-farnesyl diphosphate (FPP) to the bicyclic sesquiterpene aristolochene. Produces germacrene A as an enzyme-bound intermediate that is not released by the enzyme, but is further cyclized to produce aristolochene. Aristolochene is the likely parent compound for a number of sesquiterpenoid toxins produced by filamentous fungi. The chain is Aristolochene synthase (Ari1) from Aspergillus terreus.